We begin with the raw amino-acid sequence, 213 residues long: Orotate phosphoribosyltransferase (213 aa).

Lys26 is a 5-phospho-alpha-D-ribose 1-diphosphate binding site. 34-35 (FF) provides a ligand contact to orotate. Residues 72-73 (YK), Arg99, Lys100, Lys103, His105, and 124-132 (DDVITAGTA) each bind 5-phospho-alpha-D-ribose 1-diphosphate. Residues Thr128 and Arg156 each contribute to the orotate site.

It belongs to the purine/pyrimidine phosphoribosyltransferase family. PyrE subfamily. As to quaternary structure, homodimer. The cofactor is Mg(2+).

The enzyme catalyses orotidine 5'-phosphate + diphosphate = orotate + 5-phospho-alpha-D-ribose 1-diphosphate. It functions in the pathway pyrimidine metabolism; UMP biosynthesis via de novo pathway; UMP from orotate: step 1/2. Catalyzes the transfer of a ribosyl phosphate group from 5-phosphoribose 1-diphosphate to orotate, leading to the formation of orotidine monophosphate (OMP). The polypeptide is Orotate phosphoribosyltransferase (Escherichia coli O157:H7).